Consider the following 75-residue polypeptide: Exodeoxyribonuclease 7 small subunit (75 aa).

This sequence belongs to the XseB family. In terms of assembly, heterooligomer composed of large and small subunits.

Its subcellular location is the cytoplasm. It catalyses the reaction Exonucleolytic cleavage in either 5'- to 3'- or 3'- to 5'-direction to yield nucleoside 5'-phosphates.. In terms of biological role, bidirectionally degrades single-stranded DNA into large acid-insoluble oligonucleotides, which are then degraded further into small acid-soluble oligonucleotides. The sequence is that of Exodeoxyribonuclease 7 small subunit from Thermoanaerobacter sp. (strain X514).